Here is a 37-residue protein sequence, read N- to C-terminus: MIEVLLFGIVLGLIPITLAGLFVTAYLQYRRGDQLDL.

The helical transmembrane segment at 5–25 (LLFGIVLGLIPITLAGLFVTA) threads the bilayer.

This sequence belongs to the PetG family. The 4 large subunits of the cytochrome b6-f complex are cytochrome b6, subunit IV (17 kDa polypeptide, PetD), cytochrome f and the Rieske protein, while the 4 small subunits are PetG, PetL, PetM and PetN. The complex functions as a dimer.

It is found in the plastid. The protein localises to the chloroplast thylakoid membrane. Functionally, component of the cytochrome b6-f complex, which mediates electron transfer between photosystem II (PSII) and photosystem I (PSI), cyclic electron flow around PSI, and state transitions. PetG is required for either the stability or assembly of the cytochrome b6-f complex. The protein is Cytochrome b6-f complex subunit 5 of Lemna minor (Common duckweed).